Consider the following 255-residue polypeptide: Hydroxyacylglutathione hydrolase (255 aa).

Zn(2+) contacts are provided by H56, H58, D60, H61, H114, D133, and H171.

It belongs to the metallo-beta-lactamase superfamily. Glyoxalase II family. As to quaternary structure, monomer. Zn(2+) is required as a cofactor.

It carries out the reaction an S-(2-hydroxyacyl)glutathione + H2O = a 2-hydroxy carboxylate + glutathione + H(+). Its pathway is secondary metabolite metabolism; methylglyoxal degradation; (R)-lactate from methylglyoxal: step 2/2. Its function is as follows. Thiolesterase that catalyzes the hydrolysis of S-D-lactoyl-glutathione to form glutathione and D-lactic acid. The chain is Hydroxyacylglutathione hydrolase from Cereibacter sphaeroides (strain ATCC 17025 / ATH 2.4.3) (Rhodobacter sphaeroides).